The following is a 135-amino-acid chain: Retinol-binding protein 5 (135 aa).

This sequence belongs to the calycin superfamily. Fatty-acid binding protein (FABP) family.

The protein localises to the cytoplasm. In terms of biological role, intracellular transport of retinol. This is Retinol-binding protein 5 (RBP5) from Pongo abelii (Sumatran orangutan).